The primary structure comprises 390 residues: Branched-chain-amino-acid aminotransferase (390 aa).

At K225 the chain carries N6-(pyridoxal phosphate)lysine.

It belongs to the class-IV pyridoxal-phosphate-dependent aminotransferase family. Homodimer. It depends on pyridoxal 5'-phosphate as a cofactor.

It catalyses the reaction L-leucine + 2-oxoglutarate = 4-methyl-2-oxopentanoate + L-glutamate. The enzyme catalyses L-isoleucine + 2-oxoglutarate = (S)-3-methyl-2-oxopentanoate + L-glutamate. It carries out the reaction L-valine + 2-oxoglutarate = 3-methyl-2-oxobutanoate + L-glutamate. Catalyzes the first reaction in the catabolism of the essential branched chain amino acids leucine, isoleucine, and valine. The protein is Branched-chain-amino-acid aminotransferase of Monosiga brevicollis (Choanoflagellate).